A 366-amino-acid chain; its full sequence is NADH-quinone oxidoreductase subunit D (366 aa).

The protein belongs to the complex I 49 kDa subunit family. As to quaternary structure, NDH-1 is composed of 14 different subunits. Subunits NuoB, C, D, E, F, and G constitute the peripheral sector of the complex.

It localises to the cell membrane. It catalyses the reaction a quinone + NADH + 5 H(+)(in) = a quinol + NAD(+) + 4 H(+)(out). Functionally, NDH-1 shuttles electrons from NADH, via FMN and iron-sulfur (Fe-S) centers, to quinones in the respiratory chain. The immediate electron acceptor for the enzyme in this species is believed to be a menaquinone. Couples the redox reaction to proton translocation (for every two electrons transferred, four hydrogen ions are translocated across the cytoplasmic membrane), and thus conserves the redox energy in a proton gradient. The sequence is that of NADH-quinone oxidoreductase subunit D from Desulforamulus reducens (strain ATCC BAA-1160 / DSM 100696 / MI-1) (Desulfotomaculum reducens).